A 35-amino-acid chain; its full sequence is Mu/omega-theraphotoxin-Tap1a (35 aa).

3 disulfide bridges follow: Cys-3-Cys-18, Cys-10-Cys-23, and Cys-17-Cys-30.

The protein belongs to the neurotoxin 10 (Hwtx-1) family. 59 (Tltx) subfamily. Expressed by the venom gland.

It is found in the secreted. Its function is as follows. Gating-modifier toxin that inhibits both sodium (Nav) and calcium (Cav3) channels by inducing hyperpolarizing shift in voltage-dependence of activation and steady state inactivation. Inhibits Nav1.1/SCN1A, Nav1.2/SCN2A, Nav1.3/SCN3A, Nav1.6/SCN6A, Nav1.7/SCN9A and Cav3.1/CACNA1G sodium and calcium channels at nanomolar concentrations (IC(50)=81-301 nM). Surprisingly, selectively slows fast inactivation of Nav1.3/SCN3A. Also shows moderate inhibition of Cav3.2/CACNA1H calcium channels (IC(50)=1233 nM). Ex vivo, nearly ablates neuronal mechanosensitivity in afferent fibers innervating the colon and the bladder. In vivo, in a mouse model of irritable bowel syndrome, intracolonic administration of the toxin reverses colonic mechanical hypersensitivity. The polypeptide is Mu/omega-theraphotoxin-Tap1a (Theraphosa apophysis (Goliath pinkfoot tarantula)).